Here is a 98-residue protein sequence, read N- to C-terminus: Large ribosomal subunit protein uL23 (98 aa).

The protein belongs to the universal ribosomal protein uL23 family. Part of the 50S ribosomal subunit. Contacts protein L29, and trigger factor when it is bound to the ribosome.

Functionally, one of the early assembly proteins it binds 23S rRNA. One of the proteins that surrounds the polypeptide exit tunnel on the outside of the ribosome. Forms the main docking site for trigger factor binding to the ribosome. The polypeptide is Large ribosomal subunit protein uL23 (Streptococcus pyogenes serotype M1).